A 119-amino-acid chain; its full sequence is UPF0145 protein Bcep18194_B0595 (119 aa).

Belongs to the UPF0145 family.

This chain is UPF0145 protein Bcep18194_B0595, found in Burkholderia lata (strain ATCC 17760 / DSM 23089 / LMG 22485 / NCIMB 9086 / R18194 / 383).